A 293-amino-acid chain; its full sequence is Probable endonuclease 4 (293 aa).

The Zn(2+) site is built by histidine 77, histidine 118, glutamate 153, aspartate 187, histidine 190, histidine 221, aspartate 234, histidine 236, and glutamate 266.

The protein belongs to the AP endonuclease 2 family. Zn(2+) serves as cofactor.

The catalysed reaction is Endonucleolytic cleavage to 5'-phosphooligonucleotide end-products.. Functionally, endonuclease IV plays a role in DNA repair. It cleaves phosphodiester bonds at apurinic or apyrimidinic (AP) sites, generating a 3'-hydroxyl group and a 5'-terminal sugar phosphate. The polypeptide is Probable endonuclease 4 (Mesoplasma florum (strain ATCC 33453 / NBRC 100688 / NCTC 11704 / L1) (Acholeplasma florum)).